The chain runs to 692 residues: Elongation factor G (692 aa).

In terms of domain architecture, tr-type G spans 9–284 (HMVRNIGIAA…AVVDYLPAPD (276 aa)). GTP contacts are provided by residues 18–25 (AHIDAGKT), 82–86 (DTPGH), and 136–139 (NKMD).

This sequence belongs to the TRAFAC class translation factor GTPase superfamily. Classic translation factor GTPase family. EF-G/EF-2 subfamily.

Its subcellular location is the cytoplasm. Its function is as follows. Catalyzes the GTP-dependent ribosomal translocation step during translation elongation. During this step, the ribosome changes from the pre-translocational (PRE) to the post-translocational (POST) state as the newly formed A-site-bound peptidyl-tRNA and P-site-bound deacylated tRNA move to the P and E sites, respectively. Catalyzes the coordinated movement of the two tRNA molecules, the mRNA and conformational changes in the ribosome. The chain is Elongation factor G from Campylobacter curvus (strain 525.92).